Consider the following 328-residue polypeptide: GTPase Obg 2 (328 aa).

An Obg domain is found at 1–139 (MSFRREKFIE…HCVLLKLKIV (139 aa)). Positions 140 to 309 (SDVGIIGMPN…LHAQVKKAVV (170 aa)) constitute an OBG-type G domain. Residues 146–153 (GMPNAGKS), 171–175 (FTTLE), 192–195 (DIPG), 259–262 (NKCD), and 290–292 (GDE) contribute to the GTP site. Residues Ser153 and Thr173 each contribute to the Mg(2+) site.

It belongs to the TRAFAC class OBG-HflX-like GTPase superfamily. OBG GTPase family. In terms of assembly, monomer. It depends on Mg(2+) as a cofactor.

It localises to the cytoplasm. Functionally, an essential GTPase which binds GTP, GDP and possibly (p)ppGpp with moderate affinity, with high nucleotide exchange rates and a fairly low GTP hydrolysis rate. Plays a role in control of the cell cycle, stress response, ribosome biogenesis and in those bacteria that undergo differentiation, in morphogenesis control. The protein is GTPase Obg 2 of Anaplasma marginale (strain St. Maries).